An 82-amino-acid polypeptide reads, in one-letter code: Small ribosomal subunit protein bS16 (82 aa).

Belongs to the bacterial ribosomal protein bS16 family.

The chain is Small ribosomal subunit protein bS16 from Pectobacterium carotovorum subsp. carotovorum (strain PC1).